We begin with the raw amino-acid sequence, 585 residues long: Glutamate decarboxylase 2 (585 aa).

Residues 1-24 (MASPGSGFWSFGSEDGSADPENPG) form a disordered region. Phosphoserine occurs at positions 3, 6, 10, and 13. Residues C30 and C45 are each lipidated (S-palmitoyl cysteine). 181-183 (QLS) lines the substrate pocket. Position 396 is an N6-(pyridoxal phosphate)lysine (K396). R558 contacts substrate.

It belongs to the group II decarboxylase family. As to quaternary structure, homodimer. Requires pyridoxal 5'-phosphate as cofactor. Phosphorylated; which does not affect kinetic parameters or subcellular location. Post-translationally, palmitoylated; which is required for presynaptic clustering.

The protein resides in the cytoplasm. Its subcellular location is the cytosol. It localises to the cytoplasmic vesicle. The protein localises to the presynaptic cell membrane. It is found in the golgi apparatus membrane. The enzyme catalyses L-glutamate + H(+) = 4-aminobutanoate + CO2. In terms of biological role, catalyzes the production of GABA. This Mus musculus (Mouse) protein is Glutamate decarboxylase 2 (Gad2).